The sequence spans 946 residues: MKRLTCFFICFFLSEVSGFEIPINGLSEFVDYEDLVELAPGKFQLVAENRRYQRSLPGESEEMMEEVDQVTLYSYKVQSTITSRMATTMIQSKVVNNSPQPQNVVFDVQIPKGAFISNFSMTVDGKTFRSSIKEKTVGRALYAQARAKGKTAGLVRSSALDMENFRTEVNVLPGAKVQFELHYQEVKWRKLGSYEHRIYLQPGRLAKHLEVDVWVIEPQGLRFLHVPDTFEGHFDGVPVISKGQQKAHVSFKPTVAQQRICPNCRETAVDGELVVLYDVKREEKAGELEVFNGYFVHFFAPDNLDPIPKNILFVIDVSGSMWGVKMKQTVEAMKTILDDLRAEDHFSVIDFNQNIRTWRNDLISATKTQVADAKRYIEKIQPSGGTNINEALLRAIFILNEANNLGLLDPNSVSLIILVSDGDPTVGELKLSKIQKNVKENIQDNISLFSLGMGFDVDYDFLKRLSNENHGIAQRIYGNQDTSSQLKKFYNQVSTPLLRNVQFNYPHTSVTDVTQNNFHNYFGGSEIVVAGKFDPAKLDQIESVITATSANTQLVLETLAQMDDLQDFLSKDKHADPDFTRKLWAYLTINQLLAERSLAPTAAAKRRITRSILQMSLDHHIVTPLTSLVIENEAGDERMLADAPPQDPSCCSGALYYGSKVVPDSTPSWANPSPTPVISMLAQGSQVLESTPPPHVMRVENDPHFIIYLPKSQKNICFNIDSEPGKILNLVSDPESGIVVNGQLVGAKKPNNGKLSTYFGKLGFYFQSEDIKIEISTETITLSHGSSTFSLSWSDTAQVTNQRVQISVKKEKVVTITLDKEMSFSVLLHRVWKKHPVNVDFLGIYIPPTNKFSPKAHGLIGQFMQEPKIHIFNERPGKDPEKPEASMEVKGQKLIITRGLQKDYRTDLVFGTDVTCWFVHNSGKGFIDGHYKDYFVPQLYSFLKRP.

Positions 1–18 are cleaved as a signal peptide; sequence MKRLTCFFICFFLSEVSG. A propeptide spanning residues 19–54 is cleaved from the precursor; sequence FEIPINGLSEFVDYEDLVELAPGKFQLVAENRRYQR. Residues 56-185 form the VIT domain; that stretch reads LPGESEEMME…KVQFELHYQE (130 aa). Ser60 is modified (phosphoserine; by FAM20C). An N-linked (GlcNAc...) (complex) asparagine glycan is attached at Asn118. Cys261 and Cys264 are oxidised to a cystine. 4-carboxyglutamate occurs at positions 282 and 283. The VWFA domain occupies 308-468; it reads PKNILFVIDV…YDFLKRLSNE (161 aa). An N-linked (GlcNAc...) asparagine glycan is attached at Asn445. Phosphoserine; by FAM20C is present on Ser466. The cysteines at positions 650 and 651 are disulfide-linked. An O-glycosylated at three sites region spans residues 665 to 679; it reads STPSWANPSPTPVIS. Thr666 is a glycosylation site (O-linked (GalNAc...) threonine; partial). Ser673 carries O-linked (GalNAc...) serine glycosylation. Residues Thr675 and Thr691 are each glycosylated (O-linked (GalNAc...) threonine). Asp702 is subject to Aspartate 1-(chondroitin 4-sulfate)-ester. A propeptide spanning residues 703–946 is cleaved from the precursor; that stretch reads PHFIIYLPKS…PQLYSFLKRP (244 aa). Ser886 carries the phosphoserine; by FAM20C modification.

As to quaternary structure, I-alpha-I plasma protease inhibitors are assembled from one or two heavy chains (HC) and one light chain, bikunin. Inter-alpha-inhibitor (I-alpha-I) is composed of ITIH1/HC1, ITIH2/HC2 and bikunin. Post-translationally, heavy chains are linked to bikunin via chondroitin 4-sulfate esterified to the alpha-carboxyl of the C-terminal aspartate after propeptide cleavage. N- and O-glycosylated. O-glycosylated with core 1 or possibly core 8 glycans. In terms of processing, phosphorylated by FAM20C in the extracellular medium. As to expression, plasma.

Its subcellular location is the secreted. Functionally, may act as a carrier of hyaluronan in serum or as a binding protein between hyaluronan and other matrix protein, including those on cell surfaces in tissues to regulate the localization, synthesis and degradation of hyaluronan which are essential to cells undergoing biological processes. This chain is Inter-alpha-trypsin inhibitor heavy chain H2 (ITIH2), found in Homo sapiens (Human).